A 269-amino-acid polypeptide reads, in one-letter code: 4-hydroxy-tetrahydrodipicolinate reductase (269 aa).

Residues 8–13 (GAAGRM) and Glu34 each bind NAD(+). Residue Arg35 coordinates NADP(+). NAD(+) is bound by residues 98–100 (GTT) and 122–125 (APNY). Catalysis depends on His155, which acts as the Proton donor/acceptor. His156 serves as a coordination point for (S)-2,3,4,5-tetrahydrodipicolinate. Lys159 acts as the Proton donor in catalysis. A (S)-2,3,4,5-tetrahydrodipicolinate-binding site is contributed by 165–166 (GT).

It belongs to the DapB family.

It is found in the cytoplasm. The enzyme catalyses (S)-2,3,4,5-tetrahydrodipicolinate + NAD(+) + H2O = (2S,4S)-4-hydroxy-2,3,4,5-tetrahydrodipicolinate + NADH + H(+). The catalysed reaction is (S)-2,3,4,5-tetrahydrodipicolinate + NADP(+) + H2O = (2S,4S)-4-hydroxy-2,3,4,5-tetrahydrodipicolinate + NADPH + H(+). Its pathway is amino-acid biosynthesis; L-lysine biosynthesis via DAP pathway; (S)-tetrahydrodipicolinate from L-aspartate: step 4/4. Its function is as follows. Catalyzes the conversion of 4-hydroxy-tetrahydrodipicolinate (HTPA) to tetrahydrodipicolinate. The polypeptide is 4-hydroxy-tetrahydrodipicolinate reductase (Aliivibrio fischeri (strain ATCC 700601 / ES114) (Vibrio fischeri)).